The chain runs to 383 residues: S-adenosylmethionine synthase (383 aa).

Residue histidine 15 participates in ATP binding. Aspartate 17 is a binding site for Mg(2+). Glutamate 43 contacts K(+). Positions 56 and 99 each coordinate L-methionine. The segment at 99-109 is flexible loop; it reads QSPDINQGVDR. ATP contacts are provided by residues 164-166, 230-231, aspartate 239, 245-246, alanine 262, and lysine 266; these read DAK, RF, and RK. Position 239 (aspartate 239) interacts with L-methionine. Lysine 270 contacts L-methionine.

This sequence belongs to the AdoMet synthase family. In terms of assembly, homotetramer; dimer of dimers. Mg(2+) serves as cofactor. Requires K(+) as cofactor.

It localises to the cytoplasm. The catalysed reaction is L-methionine + ATP + H2O = S-adenosyl-L-methionine + phosphate + diphosphate. It participates in amino-acid biosynthesis; S-adenosyl-L-methionine biosynthesis; S-adenosyl-L-methionine from L-methionine: step 1/1. Catalyzes the formation of S-adenosylmethionine (AdoMet) from methionine and ATP. The overall synthetic reaction is composed of two sequential steps, AdoMet formation and the subsequent tripolyphosphate hydrolysis which occurs prior to release of AdoMet from the enzyme. The chain is S-adenosylmethionine synthase from Shewanella denitrificans (strain OS217 / ATCC BAA-1090 / DSM 15013).